Consider the following 637-residue polypeptide: Epithelial sodium channel subunit alpha (637 aa).

Positions 1 to 34 (MGTASRGGSVKAEKMPEGEKTRQCKQETEQQQKE) are disordered. Residues 1–76 (MGTASRGGSV…VCSKKNKMKT (76 aa)) are Cytoplasmic-facing. Over residues 11 to 34 (KAEKMPEGEKTRQCKQETEQQQKE) the composition is skewed to basic and acidic residues. The helical transmembrane segment at 77–97 (AFWSVLFILTFGLMYWQFGIL) threads the bilayer. At 98–548 (YREYFSYPVN…NQWSLWFGSS (451 aa)) the chain is on the extracellular side. 10 cysteine pairs are disulfide-bonded: C125/C292, C217/C224, C269/C276, C380/C465, C402/C442, C402/C461, C406/C457, C415/C442, C415/C465, and C417/C431. Residues 549–569 (VLSVMELAELILDFTVITFIL) form a helical membrane-spanning segment. Topologically, residues 570–637 (AFRWFRSKQW…PSKDGETGLE (68 aa)) are cytoplasmic.

It belongs to the amiloride-sensitive sodium channel (TC 1.A.6) family. SCNN1A subfamily. Heterotrimer; containing an alpha/SCNN1A, a beta/SCNN1B and a gamma/SCNN1G subunit. The long isoform has been found in cochlea, colon, and cartilage. The short isoform is only found in cochlea.

The protein resides in the apical cell membrane. It is found in the cell projection. It localises to the cilium. The protein localises to the cytoplasmic granule. Its subcellular location is the cytoplasm. The protein resides in the cytoplasmic vesicle. It is found in the secretory vesicle. It localises to the acrosome. The protein localises to the flagellum. It catalyses the reaction Na(+)(in) = Na(+)(out). Originally identified and characterized by its inhibition by the diuretic drug amiloride. Its function is as follows. This is one of the three pore-forming subunits of the heterotrimeric epithelial sodium channel (ENaC), a critical regulator of sodium balance and fluid homeostasis. ENaC operates in epithelial tissues, where it mediates the electrodiffusion of sodium ions from extracellular fluid through the apical membrane of cells, with water following osmotically. The sequence is that of Epithelial sodium channel subunit alpha from Gallus gallus (Chicken).